A 621-amino-acid polypeptide reads, in one-letter code: MTAPFLSSLSPTSPLASATAPFPGSRKVYARPADAPHLRVPFREIILSDPGEAPVRVADPSGPYSDPEATIDLRQGLARHRASWASARGNSTVTAGRPAPSEGDFEAFPLTYAPLRRRDETPFTQLEYARAGVITDEMIYVATRENLGRDSAVAGACARLAGGEAFGAALPAHVTPEFVRAEIAAGRAIIPANINHPELEPTIIGRNFLVKVNANIGNSALGSSIEDEVAKLVWAIRWGADTVMDLSTGKAIHATREWILRNSPVPIGTVPLYQALEKVGGDATRLDWAVFEDTLIEQCEQGVDYFTIHAGVRLAHIPLTASRTTGIVSRGGSILAKWCLSHHRENFLYERFADICAILRRYDVAFSLGDGLRPGSVADANDAAQFAELDTLGALTAVAWEHGCQVMVEGPGHVPMHKIKANMDRQLATCGEAPFYTLGPLTTDIAPGHDHITSAIGAAMIGWFGTAMLCYVTPKEHLGLPDRADVKAGVIAYKLAAHAADIAKGHPAAQLRDDAISRARFDFRWSDQFNLGLDPEGARAFHDETLPHAAHKTAHFCSMCGPKFCSMKISHDIRDGALEGADALTQAGLDQMSATFRASGGEVHLDAQALDALAWEGKPAR.

The span at 1-23 (MTAPFLSSLSPTSPLASATAPFP) shows a compositional bias: low complexity. The disordered stretch occupies residues 1-29 (MTAPFLSSLSPTSPLASATAPFPGSRKVY). Substrate-binding positions include Asn-215, Met-244, Tyr-273, His-309, 329–331 (SRG), 370–373 (DGLR), and Glu-409. A Zn(2+)-binding site is contributed by His-413. Tyr-436 provides a ligand contact to substrate. His-477 contributes to the Zn(2+) binding site. Residues Cys-557, Cys-560, and Cys-565 each contribute to the [4Fe-4S] cluster site.

This sequence belongs to the ThiC family. As to quaternary structure, homodimer. It depends on [4Fe-4S] cluster as a cofactor.

It carries out the reaction 5-amino-1-(5-phospho-beta-D-ribosyl)imidazole + S-adenosyl-L-methionine = 4-amino-2-methyl-5-(phosphooxymethyl)pyrimidine + CO + 5'-deoxyadenosine + formate + L-methionine + 3 H(+). It participates in cofactor biosynthesis; thiamine diphosphate biosynthesis. Functionally, catalyzes the synthesis of the hydroxymethylpyrimidine phosphate (HMP-P) moiety of thiamine from aminoimidazole ribotide (AIR) in a radical S-adenosyl-L-methionine (SAM)-dependent reaction. The chain is Phosphomethylpyrimidine synthase from Rhodospirillum rubrum (strain ATCC 11170 / ATH 1.1.1 / DSM 467 / LMG 4362 / NCIMB 8255 / S1).